Reading from the N-terminus, the 230-residue chain is Ethylene-responsive transcription factor ERF012 (230 aa).

The span at 1-17 (MVKQERKIQTSSTKKEM) shows a compositional bias: basic and acidic residues. The segment at 1 to 51 (MVKQERKIQTSSTKKEMPLSSSPSSSSSSSSSSSSSSCKNKNKKSKIKKYK) is disordered. Low complexity predominate over residues 20 to 39 (SSSPSSSSSSSSSSSSSSCK). Residues 40-51 (NKNKKSKIKKYK) show a composition bias toward basic residues. A DNA-binding region (AP2/ERF) is located at residues 49–106 (KYKGVRMRSWGSWVSEIRAPNQKTRIWLGSYSTAEAAARAYDVALLCLKGPQANLNFP).

Belongs to the AP2/ERF transcription factor family. ERF subfamily. Expressed cotyledons, ovules and seeds of immature siliques.

Its subcellular location is the nucleus. Transcriptional activator involved in the regulation of plant development and tolerance to abiotic stresses. Involved in salt and osmotic stress response pathways. May be regulated by the stress-related genes RD29A, RD22, DREB1A or P5CS during stress response. Binds to the GCC-box pathogenesis-related promoter element. May be involved in the regulation of gene expression by stress factors and by components of stress signal transduction pathways. The protein is Ethylene-responsive transcription factor ERF012 (ERF012) of Arabidopsis thaliana (Mouse-ear cress).